Here is a 434-residue protein sequence, read N- to C-terminus: MKRKIIAISLFLYIPLSNADNWESITKSYYTGFAISKTVESKDKDGKPVRKEVITQADLTTACNDAKASAQNVFNQIKLTLSGTWPNSQFRLVTGDTCVYNGSPGEKTESWSIRAQVEGDIQRSVPDEEPSEQTPEEICEAKPPIDGVFNNVFKGDEGGFYINYNGCEYEATGVTVCQNDGTVCSSSAWKPTGYVPESGEPSSSPLKDGDTGGTGEGGSDTGGDTGGGDTGGGSTGGDTGGSSGGGSSGGGSSGGSTGKSLTKEDVTAAIHVASPSIGDAVKDSLTEDNDQYDNQKKADEQSAKASASVSDAISDGMRGVGNFVDDFGGESSQYGTGNSEMDLSVSLAKGQLGIDREGHGSAWESFLNDGALRPSIPTGHGCTNFVMYQGSVYQIEIGCDKLNDIKSVLSWVMYCLTFWYVFQSVTSLLRKGEQ.

Positions 1–19 are cleaved as a signal peptide; it reads MKRKIIAISLFLYIPLSNA. An N1 region spans residues 20-130; sequence DNWESITKSY…IQRSVPDEEP (111 aa). Disulfide bonds link Cys-63–Cys-98, Cys-139–Cys-167, and Cys-177–Cys-184. The interval 89–107 is G1 (Gly-rich linker); sequence QFRLVTGDTCVYNGSPGEK. Residues 132–200 are N2; that stretch reads EQTPEEICEA…PTGYVPESGE (69 aa). Positions 191–260 are disordered; the sequence is PTGYVPESGE…GSSGGSTGKS (70 aa). Residues 209–258 are gly-rich linker; it reads GDTGGTGEGGSDTGGDTGGGDTGGGSTGGDTGGSSGGGSSGGGSSGGSTG. Over residues 211-257 the composition is skewed to gly residues; that stretch reads TGGTGEGGSDTGGDTGGGDTGGGSTGGDTGGSSGGGSSGGGSSGGST. CT stretches follow at residues 252–434 and 259–434; these read SSGG…KGEQ and KSLT…KGEQ. The helical transmembrane segment at 408–429 threads the bilayer; it reads VLSWVMYCLTFWYVFQSVTSLL.

Belongs to the inovirus G3P protein family. In terms of assembly, interacts with G6P; this interaction is required for proper integration of G3P and G6P into the virion. Interacts with G8P. Interacts with the tip of the host pilus. Interacts (via N-terminus) with host TolA.

It is found in the virion. It localises to the host membrane. Functionally, plays essential roles both in the penetration of the viral genome into the bacterial host via pilus retraction and in the extrusion process. During the initial step of infection, G3P mediates adsorption of the phage to its primary receptor, the tip of host F-pilus. Attachment of the phage causes pilus retraction bringing the viral particle into close proximity of the host cell inner membrane. Subsequent interaction with the host entry receptors TolA (low affinity) and penetration of the viral DNA into the host cytoplasm. In the extrusion process, G3P mediates the release of the membrane-anchored virion from the cell via its C-terminal domain. This Escherichia coli (Bacteriophage IKe) protein is Attachment protein G3P (III).